Here is a 35-residue protein sequence, read N- to C-terminus: MGIDLHLIANFAALALITLAGPAVIFILFYRRGAL.

The helical transmembrane segment at 7–27 (LIANFAALALITLAGPAVIFI) threads the bilayer.

Belongs to the Psb30/Ycf12 family. In terms of assembly, PSII is composed of 1 copy each of membrane proteins PsbA, PsbB, PsbC, PsbD, PsbE, PsbF, PsbH, PsbI, PsbJ, PsbK, PsbL, PsbM, PsbT, PsbX, PsbY, PsbZ, Psb30/Ycf12, peripheral proteins of the oxygen-evolving complex and a large number of cofactors. It forms dimeric complexes.

The protein localises to the plastid. Its subcellular location is the organellar chromatophore thylakoid membrane. Functionally, a core subunit of photosystem II (PSII), probably helps stabilize the reaction center. The sequence is that of Photosystem II reaction center protein Psb30 from Paulinella chromatophora.